A 488-amino-acid chain; its full sequence is Pre-glycoprotein polyprotein GP complex (488 aa).

Glycine 2 carries N-myristoyl glycine; by host lipidation. Residues 2–17 lie on the Extracellular side of the membrane; sequence GQLFSFFEEVPNIIHE. A helical transmembrane segment spans residues 18-32; that stretch reads AINIALIAVSLIAAL. Lysine 33 is a topological domain (cytoplasmic). Residues 34-53 traverse the membrane as a helical segment; that stretch reads GMINLWKSGLFQLIFFLTLA. Extracellular-facing segments span residues 54 to 58 and 59 to 427; these read GRSCS and FRIG…TLVD. Cysteine 57 serves as a coordination point for Zn(2+). Asparagine 69, asparagine 88, asparagine 99, asparagine 125, asparagine 171, asparagine 178, and asparagine 222 each carry an N-linked (GlcNAc...) asparagine; by host glycan. Cystine bridges form between cysteine 85–cysteine 229, cysteine 274–cysteine 287, cysteine 296–cysteine 305, and cysteine 359–cysteine 380. Residues asparagine 360, asparagine 368, asparagine 385, and asparagine 390 are each glycosylated (N-linked (GlcNAc...) asparagine; by host). A helical transmembrane segment spans residues 428–448; the sequence is ICFWSTLFFTTTLFLHLVGFP. The Cytoplasmic segment spans residues 449 to 488; it reads THRHIRGEPCPLPHRLNSRGGCRCGKYPELKKPITWHKNH. Residues histidine 450, histidine 452, cysteine 458, histidine 462, cysteine 470, cysteine 472, and histidine 488 each contribute to the Zn(2+) site.

It belongs to the arenaviridae GPC protein family. Homotetramer; disulfide-linked. In terms of assembly, homotetramer. GP2 homotetramers bind through ionic interactions with GP1 homotetramers to form the GP complex together with the stable signal peptide. The GP-C polyprotein interacts with the host protease MBTPS1/SKI-1 resulting in the polyprotein processing. Specific enzymatic cleavages in vivo yield mature proteins. GP-C polyprotein is cleaved in the endoplasmic reticulum by the host protease MBTPS1. Only cleaved glycoprotein is incorporated into virions. In terms of processing, the SSP remains stably associated with the GP complex following cleavage by signal peptidase and plays crucial roles in the trafficking of GP through the secretory pathway. Post-translationally, myristoylation is necessary for GP2-mediated fusion activity.

The protein localises to the virion membrane. It is found in the host endoplasmic reticulum membrane. The protein resides in the host Golgi apparatus membrane. It localises to the host cell membrane. In terms of biological role, interacts with the host receptor. Mediates virus attachment to host TFRC. This attachment induces virion internalization predominantly through clathrin-mediated endocytosis. Its function is as follows. Class I viral fusion protein that directs fusion of viral and host endosomal membranes, leading to delivery of the nucleocapsid into the cytoplasm. Membrane fusion is mediated by irreversible conformational changes induced upon acidification in the endosome. Functionally, stable signal peptide (SSP): cleaved and functions as a signal peptide. In addition, it is also retained as the third component of the GP complex. The SSP is required for efficient glycoprotein expression, post-translational maturation cleavage of GP1 and GP2, glycoprotein transport to the cell surface plasma membrane, formation of infectious virus particles, and acid pH-dependent glycoprotein-mediated cell fusion. This Homo sapiens (Human) protein is Pre-glycoprotein polyprotein GP complex.